The sequence spans 571 residues: Glutamate--tRNA ligase (571 aa).

A compositionally biased stretch (basic and acidic residues) spans 75-88 (GGPREDVARDKEGL). The interval 75-98 (GGPREDVARDKEGLKPLPGAEPGN) is disordered. The short motif at 105-115 (PNPSGPLHIGH) is the 'HIGH' region element.

Belongs to the class-I aminoacyl-tRNA synthetase family. Glutamate--tRNA ligase type 2 subfamily.

It localises to the cytoplasm. The catalysed reaction is tRNA(Glu) + L-glutamate + ATP = L-glutamyl-tRNA(Glu) + AMP + diphosphate. Functionally, catalyzes the attachment of glutamate to tRNA(Glu) in a two-step reaction: glutamate is first activated by ATP to form Glu-AMP and then transferred to the acceptor end of tRNA(Glu). This chain is Glutamate--tRNA ligase, found in Methanopyrus kandleri (strain AV19 / DSM 6324 / JCM 9639 / NBRC 100938).